A 393-amino-acid polypeptide reads, in one-letter code: NAD(P)H-quinone oxidoreductase subunit H, chloroplastic (393 aa).

This sequence belongs to the complex I 49 kDa subunit family. In terms of assembly, NDH is composed of at least 16 different subunits, 5 of which are encoded in the nucleus.

It localises to the plastid. The protein localises to the chloroplast thylakoid membrane. The catalysed reaction is a plastoquinone + NADH + (n+1) H(+)(in) = a plastoquinol + NAD(+) + n H(+)(out). The enzyme catalyses a plastoquinone + NADPH + (n+1) H(+)(in) = a plastoquinol + NADP(+) + n H(+)(out). NDH shuttles electrons from NAD(P)H:plastoquinone, via FMN and iron-sulfur (Fe-S) centers, to quinones in the photosynthetic chain and possibly in a chloroplast respiratory chain. The immediate electron acceptor for the enzyme in this species is believed to be plastoquinone. Couples the redox reaction to proton translocation, and thus conserves the redox energy in a proton gradient. In Helianthus annuus (Common sunflower), this protein is NAD(P)H-quinone oxidoreductase subunit H, chloroplastic.